The following is a 301-amino-acid chain: Transcriptional activator FeaR (301 aa).

In terms of domain architecture, HTH araC/xylS-type spans 199–299; that stretch reads QKVVTLIDDN…GMTPGEYRRK (101 aa). 2 DNA-binding regions (H-T-H motif) span residues 217–238 and 266–289; these read EWIA…ADKG and LAGI…KQRF.

Functionally, positive regulator of tynA/maoA and feaB/padA, the genes for 2-phenylethylamine catabolism. In Escherichia coli (strain K12), this protein is Transcriptional activator FeaR (feaR).